Consider the following 633-residue polypeptide: Lysophospholipase 1 (633 aa).

The signal sequence occupies residues Met-1–Gly-20. Residues Gly-47 to Asn-594 enclose the PLA2c domain. Asn-64, Asn-104, Asn-139, Asn-173, Asn-246, Asn-290, Asn-329, Asn-358, Asn-397, Asn-450, Asn-463, Asn-469, Asn-497, Asn-500, Asn-521, Asn-549, Asn-555, and Asn-594 each carry an N-linked (GlcNAc...) asparagine glycan. Ser-609 is lipidated: GPI-like-anchor amidated serine. Positions Ala-610–Phe-633 are cleaved as a propeptide — removed in mature form.

The protein belongs to the lysophospholipase family. Post-translationally, the GPI-like anchor contains a phosphoceramide lipid group. The anchor position has not been determined.

It localises to the cell membrane. It catalyses the reaction a 1-acyl-sn-glycero-3-phosphocholine + H2O = sn-glycerol 3-phosphocholine + a fatty acid + H(+). In terms of biological role, catalyzes the release of fatty acids from lysophospholipids. This Aspergillus fumigatus (strain CBS 144.89 / FGSC A1163 / CEA10) (Neosartorya fumigata) protein is Lysophospholipase 1 (plb1).